The following is a 349-amino-acid chain: Phenylalanine--tRNA ligase alpha subunit (349 aa).

Residue Glu259 participates in Mg(2+) binding.

The protein belongs to the class-II aminoacyl-tRNA synthetase family. Phe-tRNA synthetase alpha subunit type 1 subfamily. In terms of assembly, tetramer of two alpha and two beta subunits. Requires Mg(2+) as cofactor.

It is found in the cytoplasm. It catalyses the reaction tRNA(Phe) + L-phenylalanine + ATP = L-phenylalanyl-tRNA(Phe) + AMP + diphosphate + H(+). The protein is Phenylalanine--tRNA ligase alpha subunit of Lactobacillus gasseri (strain ATCC 33323 / DSM 20243 / BCRC 14619 / CIP 102991 / JCM 1131 / KCTC 3163 / NCIMB 11718 / NCTC 13722 / AM63).